A 67-amino-acid polypeptide reads, in one-letter code: MPQLDTSTWFITIISSMATLFILFQLKISSQTFPAPPSPKTMATEKTNNPWESKWTKTYLPLSLPPQ.

The chain crosses the membrane as a helical span at residues 8-24; that stretch reads TWFITIISSMATLFILF. The residue at position 54 (lysine 54) is an N6-acetyllysine; alternate. Residue lysine 54 is modified to N6-succinyllysine; alternate. N6-acetyllysine is present on lysine 57.

It belongs to the ATPase protein 8 family. In terms of assembly, component of the ATP synthase complex composed at least of ATP5F1A/subunit alpha, ATP5F1B/subunit beta, ATP5MC1/subunit c (homooctomer), MT-ATP6/subunit a, MT-ATP8/subunit 8, ATP5ME/subunit e, ATP5MF/subunit f, ATP5MG/subunit g, ATP5MK/subunit k, ATP5MJ/subunit j, ATP5F1C/subunit gamma, ATP5F1D/subunit delta, ATP5F1E/subunit epsilon, ATP5PF/subunit F6, ATP5PB/subunit b, ATP5PD/subunit d, ATP5PO/subunit OSCP. ATP synthase complex consists of a soluble F(1) head domain (subunits alpha(3) and beta(3)) - the catalytic core - and a membrane F(0) domain - the membrane proton channel (subunits c, a, 8, e, f, g, k and j). These two domains are linked by a central stalk (subunits gamma, delta, and epsilon) rotating inside the F1 region and a stationary peripheral stalk (subunits F6, b, d, and OSCP). Interacts with PRICKLE3.

It is found in the mitochondrion membrane. In terms of biological role, subunit 8, of the mitochondrial membrane ATP synthase complex (F(1)F(0) ATP synthase or Complex V) that produces ATP from ADP in the presence of a proton gradient across the membrane which is generated by electron transport complexes of the respiratory chain. ATP synthase complex consist of a soluble F(1) head domain - the catalytic core - and a membrane F(1) domain - the membrane proton channel. These two domains are linked by a central stalk rotating inside the F(1) region and a stationary peripheral stalk. During catalysis, ATP synthesis in the catalytic domain of F(1) is coupled via a rotary mechanism of the central stalk subunits to proton translocation. In vivo, can only synthesize ATP although its ATP hydrolase activity can be activated artificially in vitro. Part of the complex F(0) domain. The chain is ATP synthase F(0) complex subunit 8 from Rattus norvegicus (Rat).